Here is a 111-residue protein sequence, read N- to C-terminus: Large ribosomal subunit protein eL30 (111 aa).

This sequence belongs to the eukaryotic ribosomal protein eL30 family.

This Oryza sativa subsp. japonica (Rice) protein is Large ribosomal subunit protein eL30 (RPL30).